The primary structure comprises 706 residues: MHGQPHQHLHTSPTAPFNMTIPYQPSTYYGCSNVTESYKPLGKIGEGTFGEVFRAEQITTKRHVALKKILLHSEKEGFPVTALREIRILKLLRHENVIPLVDLAVERGDQSKKERGCVYMVTPYMDHDLAGLLGNQSVQLSPAHIKCYMLQLLEGIGYLHAKKFLHRDIKAANILVNDQGILKLADFGLARGYDGPAPNSQTAGVNTENLTAMVVTRWYRPPELILGDRKYTTAIDMWGIGCVFGEFFTRKPIFPGASDVDQGSKIFQAVGVPTEDTMPGWSVLPGAQNSNIWGTDATNKLDKLFGRLSKDGLDFLKGLLLLDPTKRLTAIGGKNHAYFKTEPLPCQPHELPKWQSSHELDNHKRREQEKNESKVQPPPREKQPPVREPRDRDRSRDSRPPRERDSRDRRPPRGRYDSFERPERRPEGPRDGPRDRDRDEYPRELPPRDLPPRDLPPRDRDYPPRERDWDRRPPPRDRDYPPRERDYPPRDSRDRDYHPRDRDYPPRDSRDYPRDSRDSRDSRPISPSRERFHKRPQFDMYSDTDYDRERDEDDRRRRPLPRDSSRDMTRDVYVPSRGREPRELPKGPPPAPGDKVEDKGESHNKDDKPCDTENPRDSDKSRDLGPPPGPPLPADGPPPPPSSNPPRPSETYGGSRPPWRRDSRDRRESRDRDGRDRDGRDRRLSSSRYARDEFDEYGRKRPRIER.

Positions 38 to 339 constitute a Protein kinase domain; that stretch reads YKPLGKIGEG…AIGGKNHAYF (302 aa). Residues 44–52 and Lys67 each bind ATP; that span reads IGEGTFGEV. Residue Asp168 is the Proton acceptor of the active site. 3 stretches are compositionally biased toward basic and acidic residues: residues 360–523, 545–570, and 594–623; these read LDNH…RDSR, DYDR…DMTR, and DKVE…KSRD. The interval 360–706 is disordered; sequence LDNHKRREQE…YGRKRPRIER (347 aa). The span at 625-648 shows a compositional bias: pro residues; it reads GPPPGPPLPADGPPPPPSSNPPRP. Positions 659 to 706 are enriched in basic and acidic residues; sequence WRRDSRDRRESRDRDGRDRDGRDRRLSSSRYARDEFDEYGRKRPRIER.

It belongs to the protein kinase superfamily. CMGC Ser/Thr protein kinase family. CDC2/CDKX subfamily.

It is found in the nucleus. The enzyme catalyses L-seryl-[protein] + ATP = O-phospho-L-seryl-[protein] + ADP + H(+). It catalyses the reaction L-threonyl-[protein] + ATP = O-phospho-L-threonyl-[protein] + ADP + H(+). It carries out the reaction [DNA-directed RNA polymerase] + ATP = phospho-[DNA-directed RNA polymerase] + ADP + H(+). Functionally, serine/threonine-protein kinase involved in transcription regulation. Phosphorylates the UBC2/RAD6 ubiquitin-conjugating enzyme (E2), leading to monoubiquitination of histone H2B and the silencing of telomeric-associated genes. Also required for histone H3 methylation. Necessary for the recovery from pheromone-induced growth arrest in the cell cycle G1 phase. In Yarrowia lipolytica (strain CLIB 122 / E 150) (Yeast), this protein is Serine/threonine-protein kinase BUR1 (BUR1).